The primary structure comprises 828 residues: Periplasmic nitrate reductase (828 aa).

Positions 1 to 31 (MKLSRRHFMKANAVAAAAAVAGITIPIAVRA) form a signal peptide, tat-type signal. The 4Fe-4S Mo/W bis-MGD-type domain maps to 39 to 95 (IHWDKAPCRFCGVGCGVLVGTQNGRIVASQGDPDAPVNRGLNCIKGYFLPKIMYGQD). [4Fe-4S] cluster contacts are provided by Cys-46, Cys-49, Cys-53, and Cys-81. Mo-bis(molybdopterin guanine dinucleotide)-binding positions include Lys-83, Gln-150, Asn-175, Cys-179, 212 to 219 (WGSNMAEM), 243 to 247 (STYQH), 262 to 264 (QTD), Met-372, Gln-376, Asn-482, 508 to 509 (SD), Lys-531, Asp-558, and 718 to 727 (TGRVLEHWHT). Residue Phe-794 participates in substrate binding. Mo-bis(molybdopterin guanine dinucleotide) is bound by residues Asn-802 and Lys-819.

It belongs to the prokaryotic molybdopterin-containing oxidoreductase family. NasA/NapA/NarB subfamily. Component of the periplasmic nitrate reductase NapAB complex composed of NapA and NapB. [4Fe-4S] cluster serves as cofactor. Mo-bis(molybdopterin guanine dinucleotide) is required as a cofactor. Post-translationally, predicted to be exported by the Tat system. The position of the signal peptide cleavage has not been experimentally proven.

The protein localises to the periplasm. It catalyses the reaction 2 Fe(II)-[cytochrome] + nitrate + 2 H(+) = 2 Fe(III)-[cytochrome] + nitrite + H2O. Catalytic subunit of the periplasmic nitrate reductase complex NapAB. Receives electrons from NapB and catalyzes the reduction of nitrate to nitrite. The protein is Periplasmic nitrate reductase of Pectobacterium carotovorum subsp. carotovorum (strain PC1).